Reading from the N-terminus, the 324-residue chain is Lipoyl synthase (324 aa).

Residues Cys-71, Cys-76, Cys-82, Cys-97, Cys-101, Cys-104, and Ser-311 each contribute to the [4Fe-4S] cluster site. In terms of domain architecture, Radical SAM core spans 83–300; that stretch reads FGHGTATFLI…GDKAREMGFT (218 aa).

It belongs to the radical SAM superfamily. Lipoyl synthase family. [4Fe-4S] cluster is required as a cofactor.

It is found in the cytoplasm. It carries out the reaction [[Fe-S] cluster scaffold protein carrying a second [4Fe-4S](2+) cluster] + N(6)-octanoyl-L-lysyl-[protein] + 2 oxidized [2Fe-2S]-[ferredoxin] + 2 S-adenosyl-L-methionine + 4 H(+) = [[Fe-S] cluster scaffold protein] + N(6)-[(R)-dihydrolipoyl]-L-lysyl-[protein] + 4 Fe(3+) + 2 hydrogen sulfide + 2 5'-deoxyadenosine + 2 L-methionine + 2 reduced [2Fe-2S]-[ferredoxin]. It participates in protein modification; protein lipoylation via endogenous pathway; protein N(6)-(lipoyl)lysine from octanoyl-[acyl-carrier-protein]: step 2/2. Catalyzes the radical-mediated insertion of two sulfur atoms into the C-6 and C-8 positions of the octanoyl moiety bound to the lipoyl domains of lipoate-dependent enzymes, thereby converting the octanoylated domains into lipoylated derivatives. In Nitrosococcus oceani (strain ATCC 19707 / BCRC 17464 / JCM 30415 / NCIMB 11848 / C-107), this protein is Lipoyl synthase.